A 306-amino-acid polypeptide reads, in one-letter code: Mitochondrial substrate carrier family protein M (306 aa).

The Mitochondrial intermembrane segment spans residues 1–10; sequence MRYILNNNVE. Solcar repeat units follow at residues 5-98, 108-195, and 207-299; these read LNNN…YKNI, LNTF…IKFY, and LNAS…IKKS. The chain crosses the membrane as a helical span at residues 11 to 31; the sequence is GTSALLGSTVATAFLQPFDFL. Topologically, residues 32–72 are mitochondrial matrix; it reads KIRLQGSGFASGGDLNKFKRVGVIDTCKNVLKNEGIKQFWR. The chain crosses the membrane as a helical span at residues 73-89; it reads GSSPTIVASGIAWGTYM. Topologically, residues 90-113 are mitochondrial intermembrane; that stretch reads HFYEAYKNILKSKYNVTQLNTFDH. The helical transmembrane segment at 114–134 threads the bilayer; sequence FICAVGASATQVFITNPIFLI. At 135–163 the chain is on the mitochondrial matrix side; the sequence is KTRMQLQTPGSANYYTGIFDGIKKTVKVE. Residues 164-184 form a helical membrane-spanning segment; it reads GFKGLYKGVIPSLWLTFHGGI. Residues 185–211 lie on the Mitochondrial intermembrane side of the membrane; it reads QMSSYEHIKFYFSSNSGKSLDSLNASE. Residues 212–232 form a helical membrane-spanning segment; that stretch reads IFIASSISKFLASTILYPFQV. The Mitochondrial matrix portion of the chain corresponds to 233 to 278; sequence VKTRLQDERNIPNQNNVRVYNGTKDVIFKILKNEGIIGFYRGLVPN. A helical transmembrane segment spans residues 279–296; sequence TLKVIPNTSITLLLYEEI. Topologically, residues 297–306 are mitochondrial intermembrane; it reads KKSFNYIINE.

Belongs to the mitochondrial carrier (TC 2.A.29) family.

It is found in the mitochondrion inner membrane. Mitochondrial solute carriers shuttle metabolites, nucleotides, and cofactors through the mitochondrial inner membrane. Transports folate across the inner membranes of mitochondria. This Dictyostelium discoideum (Social amoeba) protein is Mitochondrial substrate carrier family protein M (mcfM).